We begin with the raw amino-acid sequence, 157 residues long: 2-C-methyl-D-erythritol 2,4-cyclodiphosphate synthase (157 aa).

A divalent metal cation is bound by residues Asp8 and His10. 4-CDP-2-C-methyl-D-erythritol 2-phosphate is bound by residues 8–10 (DVH) and 34–35 (HS). His42 serves as a coordination point for a divalent metal cation. Residues 56–58 (DIG), 61–65 (FPDSD), 132–135 (TTTE), Phe139, and Arg142 contribute to the 4-CDP-2-C-methyl-D-erythritol 2-phosphate site.

It belongs to the IspF family. As to quaternary structure, homotrimer. A divalent metal cation serves as cofactor.

The catalysed reaction is 4-CDP-2-C-methyl-D-erythritol 2-phosphate = 2-C-methyl-D-erythritol 2,4-cyclic diphosphate + CMP. It participates in isoprenoid biosynthesis; isopentenyl diphosphate biosynthesis via DXP pathway; isopentenyl diphosphate from 1-deoxy-D-xylulose 5-phosphate: step 4/6. In terms of biological role, involved in the biosynthesis of isopentenyl diphosphate (IPP) and dimethylallyl diphosphate (DMAPP), two major building blocks of isoprenoid compounds. Catalyzes the conversion of 4-diphosphocytidyl-2-C-methyl-D-erythritol 2-phosphate (CDP-ME2P) to 2-C-methyl-D-erythritol 2,4-cyclodiphosphate (ME-CPP) with a corresponding release of cytidine 5-monophosphate (CMP). The polypeptide is 2-C-methyl-D-erythritol 2,4-cyclodiphosphate synthase (Syntrophomonas wolfei subsp. wolfei (strain DSM 2245B / Goettingen)).